The following is a 351-amino-acid chain: D-alanine--D-alanine ligase (351 aa).

The ATP-grasp domain maps to 146–340 (KEIMLYNNIK…YEDLCESIVL (195 aa)). 173–226 (AFDYPMVVKPNSGGSSIGTRIVHDEAELAESLKDAYRFDDEIIVEEFITGREFS) lines the ATP pocket. Mg(2+) contacts are provided by D295, E307, and N309.

It belongs to the D-alanine--D-alanine ligase family. The cofactor is Mg(2+). Mn(2+) serves as cofactor.

The protein resides in the cytoplasm. It catalyses the reaction 2 D-alanine + ATP = D-alanyl-D-alanine + ADP + phosphate + H(+). The protein operates within cell wall biogenesis; peptidoglycan biosynthesis. Its function is as follows. Cell wall formation. This chain is D-alanine--D-alanine ligase, found in Pediococcus pentosaceus (strain ATCC 25745 / CCUG 21536 / LMG 10740 / 183-1w).